The sequence spans 654 residues: Dystrobrevin beta (654 aa).

Methionine 1 is subject to N-acetylmethionine. 4 positions are modified to phosphothreonine: threonine 11, threonine 69, threonine 179, and threonine 212. The segment at 238–294 (FHPVECSYCHCESMMGFRYRCQQCHNYQLCQNCFWRGHAGGPHSNQHQMKELSSWKS) adopts a ZZ-type zinc-finger fold. Cysteine 243, cysteine 246, cysteine 258, cysteine 261, cysteine 267, cysteine 270, histidine 280, and histidine 284 together coordinate Zn(2+). Serine 394 carries the phosphoserine modification. Positions 399 to 448 (DEEHRLIARYAARLAAEAGNMTRPPTDASFNFDANKQQRQLIAELENKNR) are syntrophin-binding region. Threonine 424 bears the Phosphothreonine mark. Positions 429-519 (NFDANKQQRQ…LEGLMKLLKA (91 aa)) form a coiled coil. Positions 520–562 (QATGSPHTSPTHGGGRSMPMPVRSTSAGSTPTHGPQDSLSGVG) are disordered. Polar residues-rich tracts occupy residues 521 to 530 (ATGSPHTSPT) and 542 to 558 (RSTS…QDSL).

It belongs to the dystrophin family. Dystrobrevin subfamily. As to quaternary structure, interacts with dystrophin short form DP71 and syntrophins SNTG1 and SNTG2. Binds DTNBP1. Forms a specific complex composed of DMD, SNTB2 and SNTA1 in neuron; the interaction with SNTB2 and SNTA1 is DMD independent. Interacts with UTRN and dystrophin short form DP71 in the kidney and liver. Interacts with SNTB1, SNTB2 and SNTA1 in kidney and liver. Interacts with KIF5A. Interacts with HMG20A and HMG20B. Interacts with OLFM1. Interacts with PRKAR2B and PRKAR1A. In terms of processing, phosphorylated by PKA. Phosphorylation at Thr-11 alters the interaction with KIF5A. In terms of tissue distribution, expressed in neurons. In the isocortex, expressed most prominently in the somata (including the nuclei) and the dendrites of the pyramidal cells. Expressed in the hippocampus CA1, CA2, and CA3 neurons, namely in the initial segments of dendrites. Expressed in the Purkinje cells, molecular layer interneurons, and granule cells of cerebellum. Expressed in axon fascicles associated with the spinal trigeminal tract and in the internal capsule in the brainstem.

It is found in the cytoplasm. The protein localises to the postsynaptic density. Its subcellular location is the cell projection. The protein resides in the dendrite. It localises to the basal cell membrane. It is found in the postsynapse. The protein localises to the nucleus. In terms of biological role, scaffolding protein that assembles DMD and SNTA1 molecules to the basal membrane of kidney cells and liver sinusoids. May function as a repressor of the SYN1 promoter through the binding of repressor element-1 (RE-1), in turn regulates SYN1 expression and may be involved in cell proliferation regulation during the early phase of neural differentiation. May be required for proper maturation and function of a subset of inhibitory synapses. The sequence is that of Dystrobrevin beta from Rattus norvegicus (Rat).